We begin with the raw amino-acid sequence, 435 residues long: WD repeat domain phosphoinositide-interacting protein 2 (435 aa).

Residues A182–E222 form a WD 1 repeat. The L/FRRG motif signature appears at F223–G226. 2 WD repeats span residues K228–P267 and G311–C349. The disordered stretch occupies residues V386–E435.

It belongs to the WD repeat PROPPIN family.

The protein resides in the preautophagosomal structure membrane. Functionally, component of the autophagy machinery that controls the major intracellular degradation process by which cytoplasmic materials are packaged into autophagosomes and delivered to lysosomes for degradation. Involved in an early step of the formation of preautophagosomal structures. The chain is WD repeat domain phosphoinositide-interacting protein 2 (wipi2) from Xenopus laevis (African clawed frog).